A 712-amino-acid chain; its full sequence is Polyribonucleotide nucleotidyltransferase (712 aa).

Mg(2+) contacts are provided by Asp487 and Asp493. Residues 554–613 form the KH domain; it reads PKIITMTINPDKIRDVIGPSGKQINKIIEETGVKIDIEQDGTVFISSINQEMNDKAKKII. In terms of domain architecture, S1 motif spans 623-691; the sequence is GEIYEGKVKR…KQGRVNLSRK (69 aa).

Belongs to the polyribonucleotide nucleotidyltransferase family. The cofactor is Mg(2+).

Its subcellular location is the cytoplasm. The enzyme catalyses RNA(n+1) + phosphate = RNA(n) + a ribonucleoside 5'-diphosphate. In terms of biological role, involved in mRNA degradation. Catalyzes the phosphorolysis of single-stranded polyribonucleotides processively in the 3'- to 5'-direction. In Bacillus cereus (strain AH187), this protein is Polyribonucleotide nucleotidyltransferase.